The sequence spans 106 residues: Putative double-stranded DNA mimic protein VV1_3059 (106 aa).

This sequence belongs to the putative dsDNA mimic protein family.

In terms of biological role, may act as a double-stranded DNA (dsDNA) mimic. Probably regulates the activity of a dsDNA-binding protein. This is Putative double-stranded DNA mimic protein VV1_3059 from Vibrio vulnificus (strain CMCP6).